The following is an 803-amino-acid chain: Early 94 kDa protein (803 aa).

The protein is Early 94 kDa protein of Lepidoptera (butterflies and moths).